Consider the following 482-residue polypeptide: UDP-N-acetylmuramate--L-alanine ligase (482 aa).

123–129 (GTHGKTT) serves as a coordination point for ATP.

This sequence belongs to the MurCDEF family.

It is found in the cytoplasm. It carries out the reaction UDP-N-acetyl-alpha-D-muramate + L-alanine + ATP = UDP-N-acetyl-alpha-D-muramoyl-L-alanine + ADP + phosphate + H(+). It participates in cell wall biogenesis; peptidoglycan biosynthesis. In terms of biological role, cell wall formation. The chain is UDP-N-acetylmuramate--L-alanine ligase from Pseudomonas putida (strain ATCC 700007 / DSM 6899 / JCM 31910 / BCRC 17059 / LMG 24140 / F1).